The primary structure comprises 162 residues: Endoribonuclease YbeY (162 aa).

Residues His130, His134, and His140 each contribute to the Zn(2+) site.

The protein belongs to the endoribonuclease YbeY family. Zn(2+) serves as cofactor.

The protein localises to the cytoplasm. Functionally, single strand-specific metallo-endoribonuclease involved in late-stage 70S ribosome quality control and in maturation of the 3' terminus of the 16S rRNA. In Nitratidesulfovibrio vulgaris (strain ATCC 29579 / DSM 644 / CCUG 34227 / NCIMB 8303 / VKM B-1760 / Hildenborough) (Desulfovibrio vulgaris), this protein is Endoribonuclease YbeY.